A 231-amino-acid polypeptide reads, in one-letter code: Large ribosomal subunit protein uL1 (231 aa).

The protein belongs to the universal ribosomal protein uL1 family. As to quaternary structure, part of the 50S ribosomal subunit.

In terms of biological role, binds directly to 23S rRNA. The L1 stalk is quite mobile in the ribosome, and is involved in E site tRNA release. Protein L1 is also a translational repressor protein, it controls the translation of the L11 operon by binding to its mRNA. This chain is Large ribosomal subunit protein uL1, found in Chlorobaculum tepidum (strain ATCC 49652 / DSM 12025 / NBRC 103806 / TLS) (Chlorobium tepidum).